The primary structure comprises 183 residues: Small ribosomal subunit protein eS10z (183 aa).

The tract at residues 91 to 183 is disordered; it reads LKKSARPPGR…GAGPTSSSME (93 aa). Basic and acidic residues predominate over residues 109-130; the sequence is DRPRGPPRFEGDRPRFGDRDGY. 2 stretches are compositionally biased toward gly residues: residues 131–146 and 161–175; these read RGGP…GEKG and GRPG…GFGA.

It belongs to the eukaryotic ribosomal protein eS10 family.

It is found in the cytoplasm. The protein is Small ribosomal subunit protein eS10z of Oryza sativa subsp. japonica (Rice).